We begin with the raw amino-acid sequence, 268 residues long: Putative hydro-lyase ABAYE2440 (268 aa).

The protein belongs to the D-glutamate cyclase family.

In Acinetobacter baumannii (strain AYE), this protein is Putative hydro-lyase ABAYE2440.